The sequence spans 212 residues: Probable GTP-binding protein EngB (212 aa).

Residues serine 38–proline 210 enclose the EngB-type G domain. Residues glycine 46–serine 53, glycine 73–glutamine 77, aspartate 91–glycine 94, threonine 158–aspartate 161, and valine 189–asparagine 191 contribute to the GTP site. Mg(2+)-binding residues include serine 53 and threonine 75.

It belongs to the TRAFAC class TrmE-Era-EngA-EngB-Septin-like GTPase superfamily. EngB GTPase family. The cofactor is Mg(2+).

Its function is as follows. Necessary for normal cell division and for the maintenance of normal septation. This is Probable GTP-binding protein EngB from Rickettsia conorii (strain ATCC VR-613 / Malish 7).